A 404-amino-acid chain; its full sequence is Probable tRNA sulfurtransferase (404 aa).

Residues 60-165 (TAVAESLKQV…EEAAYLSYET (106 aa)) form the THUMP domain. ATP is bound by residues 183–184 (ML), 208–209 (HF), arginine 265, glycine 287, and glutamine 296.

This sequence belongs to the ThiI family.

The protein resides in the cytoplasm. It carries out the reaction [ThiI sulfur-carrier protein]-S-sulfanyl-L-cysteine + a uridine in tRNA + 2 reduced [2Fe-2S]-[ferredoxin] + ATP + H(+) = [ThiI sulfur-carrier protein]-L-cysteine + a 4-thiouridine in tRNA + 2 oxidized [2Fe-2S]-[ferredoxin] + AMP + diphosphate. The enzyme catalyses [ThiS sulfur-carrier protein]-C-terminal Gly-Gly-AMP + S-sulfanyl-L-cysteinyl-[cysteine desulfurase] + AH2 = [ThiS sulfur-carrier protein]-C-terminal-Gly-aminoethanethioate + L-cysteinyl-[cysteine desulfurase] + A + AMP + 2 H(+). It functions in the pathway cofactor biosynthesis; thiamine diphosphate biosynthesis. Its function is as follows. Catalyzes the ATP-dependent transfer of a sulfur to tRNA to produce 4-thiouridine in position 8 of tRNAs, which functions as a near-UV photosensor. Also catalyzes the transfer of sulfur to the sulfur carrier protein ThiS, forming ThiS-thiocarboxylate. This is a step in the synthesis of thiazole, in the thiamine biosynthesis pathway. The sulfur is donated as persulfide by IscS. In Streptococcus pneumoniae (strain ATCC 700669 / Spain 23F-1), this protein is Probable tRNA sulfurtransferase.